Reading from the N-terminus, the 689-residue chain is MATSQRKILVTSALPYANGPIHLGHMLEYIQTDIWSRYQKLRGHECHYICADDAHGTPIMLKAQQLGIAPEDMIAQVNKEHQQDFADFNVAFDNYHSTHSEENRLMASDIYLKLRDNGYIKSKSISQLFDPEKSMFLPDRFVKGTCPKCKSPDQYGDNCDSCGATYSPTELINPKSAVSGATPVMKDTEHFFFDLPAFEGMLKEWTRSGALQVEMANKLDEWFEQGLQQWDITRDAPYFGFEIPDAPGKYFYVWLDAPIGYMGSFKNLCAKRPELSFDEFWGKDSTAEVYHFIGKDIVYFHSLFWPAMLHGSGYRQPNSVYAHGYVTVNGAKMSKSKGTFIKARTYLDHLDPEYLRYYYAAKLSSRIDDLDLNLEDFAQRVNSDLVGKLVNLASRTAGFITKRFDGKLAKINDTTLTEAFLAKQDVIADFYESREYGKAMREIMALADIANGFVADAAPWQMVKHDDQQEAAHQVCSNALNLFRILVTYLKPVLPRLAQDVEAFFQLPLTWDALSQDLAGHEIAPFKAMMQRVELDKVNAMVADSKDNLQVTADAPKTAAPEKTAKASSVSSEPLVDDPISETINFDDFAKIDLRIARIVKAEHVADADKLLKLQLDIGGETRQVFAGIKSAYSPEDLEGKLTVMVANLAPRKMRFGMSEGMVLAAGPGGSDLWILEPHEGAQPGMRVK.

Residues 15-25 carry the 'HIGH' region motif; sequence PYANGPIHLGH. Zn(2+)-binding residues include Cys146, Cys149, Cys159, and Cys162. Residues 332 to 336 carry the 'KMSKS' region motif; sequence KMSKS. Position 335 (Lys335) interacts with ATP. The tRNA-binding domain maps to 588–689; the sequence is DFAKIDLRIA…EGAQPGMRVK (102 aa).

The protein belongs to the class-I aminoacyl-tRNA synthetase family. MetG type 1 subfamily. Homodimer. It depends on Zn(2+) as a cofactor.

The protein localises to the cytoplasm. The catalysed reaction is tRNA(Met) + L-methionine + ATP = L-methionyl-tRNA(Met) + AMP + diphosphate. In terms of biological role, is required not only for elongation of protein synthesis but also for the initiation of all mRNA translation through initiator tRNA(fMet) aminoacylation. This chain is Methionine--tRNA ligase, found in Shewanella baltica (strain OS223).